Reading from the N-terminus, the 121-residue chain is Putative membrane protein insertion efficiency factor (121 aa).

The disordered stretch occupies residues 97–121; it reads VPARRDRHAGGRRCCPANVDEQRST.

It belongs to the UPF0161 family.

The protein localises to the cell membrane. Functionally, could be involved in insertion of integral membrane proteins into the membrane. The polypeptide is Putative membrane protein insertion efficiency factor (Rhodococcus jostii (strain RHA1)).